The primary structure comprises 115 residues: Probable 4-amino-4-deoxy-L-arabinose-phosphoundecaprenol flippase subunit ArnE (115 aa).

A run of 3 helical transmembrane segments spans residues 42–62 (PWPW…LLLL), 65–85 (VEVG…TLAA), and 93–112 (VDRR…ALLG). One can recognise an EamA domain in the interval 46–113 (LALLALGLGL…IVAGVALLGR (68 aa)).

It belongs to the ArnE family. As to quaternary structure, heterodimer of ArnE and ArnF.

The protein resides in the cell inner membrane. It participates in bacterial outer membrane biogenesis; lipopolysaccharide biosynthesis. Functionally, translocates 4-amino-4-deoxy-L-arabinose-phosphoundecaprenol (alpha-L-Ara4N-phosphoundecaprenol) from the cytoplasmic to the periplasmic side of the inner membrane. The sequence is that of Probable 4-amino-4-deoxy-L-arabinose-phosphoundecaprenol flippase subunit ArnE from Pseudomonas aeruginosa (strain LESB58).